The primary structure comprises 278 residues: MTVLHSVDFFPSGNASVAIEPRLPQADFPEHHHDFHEIVIVEHGTGIHVFNGQPYTITGGTVCFVRDHDRHLYEHTDNLCLTNVLYRSPDRFQFLAGLNQLLPQEQDGQYPSHWRVNYSVLQQVRQLVAQMEQQEGENDLPSTASREILFMQLLLLLRKSSLQENLENSASRLNLLLAWLEDHFADEVNWDAVADQFSLSLRTLHRQLKQQTGLTPQRYLNRLRLMKARHLLRHSEASVTDIAYRCGFSDSNHFSTLFRREFNWSPRDIRQGRDGFLQ.

Residues 174-272 (NLLLAWLEDH…NWSPRDIRQG (99 aa)) form the HTH araC/xylS-type domain. 2 DNA-binding regions (H-T-H motif) span residues 191–212 (DAVADQFSLSLRTLHRQLKQQT) and 239–262 (VTDIAYRCGFSDSNHFSTLFRREF).

Binds DNA as a dimer.

Its subcellular location is the cytoplasm. Functionally, activates expression of the rhaBAD and rhaT operons. The sequence is that of HTH-type transcriptional activator RhaS from Escherichia coli O6:H1 (strain CFT073 / ATCC 700928 / UPEC).